A 361-amino-acid polypeptide reads, in one-letter code: Chorismate synthase (361 aa).

NADP(+) is bound by residues arginine 48 and arginine 54. FMN contacts are provided by residues 125-127, 238-239, glycine 278, 293-297, and arginine 319; these read RSS, NA, and KPTSS.

Belongs to the chorismate synthase family. As to quaternary structure, homotetramer. FMNH2 serves as cofactor.

The catalysed reaction is 5-O-(1-carboxyvinyl)-3-phosphoshikimate = chorismate + phosphate. It participates in metabolic intermediate biosynthesis; chorismate biosynthesis; chorismate from D-erythrose 4-phosphate and phosphoenolpyruvate: step 7/7. Catalyzes the anti-1,4-elimination of the C-3 phosphate and the C-6 proR hydrogen from 5-enolpyruvylshikimate-3-phosphate (EPSP) to yield chorismate, which is the branch point compound that serves as the starting substrate for the three terminal pathways of aromatic amino acid biosynthesis. This reaction introduces a second double bond into the aromatic ring system. The protein is Chorismate synthase of Yersinia pseudotuberculosis serotype IB (strain PB1/+).